Consider the following 406-residue polypeptide: Cysteine desulfurase (406 aa).

Position 226 is an N6-(pyridoxal phosphate)lysine (K226). The active-site Cysteine persulfide intermediate is C364.

This sequence belongs to the class-V pyridoxal-phosphate-dependent aminotransferase family. Csd subfamily. In terms of assembly, homodimer. Interacts with SufE and the SufBCD complex composed of SufB, SufC and SufD. The interaction with SufE is required to mediate the direct transfer of the sulfur atom from the S-sulfanylcysteine. The cofactor is pyridoxal 5'-phosphate.

Its subcellular location is the cytoplasm. It carries out the reaction (sulfur carrier)-H + L-cysteine = (sulfur carrier)-SH + L-alanine. It catalyses the reaction L-selenocysteine + AH2 = hydrogenselenide + L-alanine + A + H(+). It functions in the pathway cofactor biosynthesis; iron-sulfur cluster biosynthesis. Its function is as follows. Cysteine desulfurases mobilize the sulfur from L-cysteine to yield L-alanine, an essential step in sulfur metabolism for biosynthesis of a variety of sulfur-containing biomolecules. Component of the suf operon, which is activated and required under specific conditions such as oxidative stress and iron limitation. Acts as a potent selenocysteine lyase in vitro, that mobilizes selenium from L-selenocysteine. Selenocysteine lyase activity is however unsure in vivo. The protein is Cysteine desulfurase of Salmonella heidelberg (strain SL476).